Reading from the N-terminus, the 473-residue chain is Photosystem II CP43 reaction center protein (473 aa).

Positions 1–14 (MKTLYSLRRFYHVE) are excised as a propeptide. Thr-15 is subject to N-acetylthreonine. The residue at position 15 (Thr-15) is a Phosphothreonine. The next 5 helical transmembrane spans lie at 69-93 (LFEV…PHLA), 134-155 (LLGP…KDRN), 178-200 (KALF…RKIT), 255-275 (KPFA…LSYS), and 291-312 (WFNN…ASQA). Residue Glu-367 participates in [CaMn4O5] cluster binding. The helical transmembrane segment at 447 to 471 (RARAAAAGFEKGIDRDFEPVLSMTP) threads the bilayer.

It belongs to the PsbB/PsbC family. PsbC subfamily. In terms of assembly, PSII is composed of 1 copy each of membrane proteins PsbA, PsbB, PsbC, PsbD, PsbE, PsbF, PsbH, PsbI, PsbJ, PsbK, PsbL, PsbM, PsbT, PsbX, PsbY, PsbZ, Psb30/Ycf12, at least 3 peripheral proteins of the oxygen-evolving complex and a large number of cofactors. It forms dimeric complexes. Binds multiple chlorophylls and provides some of the ligands for the Ca-4Mn-5O cluster of the oxygen-evolving complex. It may also provide a ligand for a Cl- that is required for oxygen evolution. PSII binds additional chlorophylls, carotenoids and specific lipids. serves as cofactor.

The protein resides in the plastid. Its subcellular location is the chloroplast thylakoid membrane. Functionally, one of the components of the core complex of photosystem II (PSII). It binds chlorophyll and helps catalyze the primary light-induced photochemical processes of PSII. PSII is a light-driven water:plastoquinone oxidoreductase, using light energy to abstract electrons from H(2)O, generating O(2) and a proton gradient subsequently used for ATP formation. The sequence is that of Photosystem II CP43 reaction center protein from Fagopyrum esculentum subsp. ancestrale (Wild buckwheat).